Reading from the N-terminus, the 144-residue chain is Large ribosomal subunit protein uL11 (144 aa).

This sequence belongs to the universal ribosomal protein uL11 family. As to quaternary structure, part of the ribosomal stalk of the 50S ribosomal subunit. Interacts with L10 and the large rRNA to form the base of the stalk. L10 forms an elongated spine to which L12 dimers bind in a sequential fashion forming a multimeric L10(L12)X complex. In terms of processing, one or more lysine residues are methylated.

In terms of biological role, forms part of the ribosomal stalk which helps the ribosome interact with GTP-bound translation factors. The chain is Large ribosomal subunit protein uL11 from Corynebacterium glutamicum (strain R).